We begin with the raw amino-acid sequence, 379 residues long: Homoserine O-succinyltransferase (379 aa).

Residues 51–360 (NAVLICHALS…DAPQGHDAFL (310 aa)) form the AB hydrolase-1 domain. The active-site Nucleophile is S157. Substrate is bound at residue R227. Catalysis depends on residues D323 and H356. A substrate-binding site is contributed by D357.

The protein belongs to the AB hydrolase superfamily. MetX family. In terms of assembly, homodimer.

The protein localises to the cytoplasm. The enzyme catalyses L-homoserine + succinyl-CoA = O-succinyl-L-homoserine + CoA. It participates in amino-acid biosynthesis; L-methionine biosynthesis via de novo pathway; O-succinyl-L-homoserine from L-homoserine: step 1/1. In terms of biological role, transfers a succinyl group from succinyl-CoA to L-homoserine, forming succinyl-L-homoserine. This Stutzerimonas stutzeri (strain A1501) (Pseudomonas stutzeri) protein is Homoserine O-succinyltransferase.